A 209-amino-acid chain; its full sequence is Large ribosomal subunit protein uL4 (209 aa).

A disordered region spans residues 47 to 72 (TSSTKTRSEVRGSSKKPWKQKGTGRA). The segment covering 59–72 (SSKKPWKQKGTGRA) has biased composition (basic residues).

Belongs to the universal ribosomal protein uL4 family. As to quaternary structure, part of the 50S ribosomal subunit.

In terms of biological role, one of the primary rRNA binding proteins, this protein initially binds near the 5'-end of the 23S rRNA. It is important during the early stages of 50S assembly. It makes multiple contacts with different domains of the 23S rRNA in the assembled 50S subunit and ribosome. Forms part of the polypeptide exit tunnel. In Borreliella burgdorferi (strain ZS7) (Borrelia burgdorferi), this protein is Large ribosomal subunit protein uL4.